Here is an 81-residue protein sequence, read N- to C-terminus: MATSKSGGSSKNGRDSISKRLGVKRSGGQFVKAEEIIVRQRGTKFHKGRNVGLGRDYTLFALSSGKVEFKTLKGKKYVNII.

Residues 1-11 (MATSKSGGSSK) are compositionally biased toward polar residues. Positions 1–23 (MATSKSGGSSKNGRDSISKRLGV) are disordered.

It belongs to the bacterial ribosomal protein bL27 family.

The sequence is that of Large ribosomal subunit protein bL27 from Borrelia garinii subsp. bavariensis (strain ATCC BAA-2496 / DSM 23469 / PBi) (Borreliella bavariensis).